A 98-amino-acid chain; its full sequence is NADH-ubiquinone oxidoreductase chain 4L (98 aa).

3 helical membrane passes run 2–22, 29–49, and 61–81; these read PSISTNIILAFITALLGMLIF, SLLCLEGMMLSMFILSTLTIL, and ILLLVFAACEAAVGLALLVTV.

Belongs to the complex I subunit 4L family. In terms of assembly, core subunit of respiratory chain NADH dehydrogenase (Complex I) which is composed of 45 different subunits.

The protein resides in the mitochondrion inner membrane. It catalyses the reaction a ubiquinone + NADH + 5 H(+)(in) = a ubiquinol + NAD(+) + 4 H(+)(out). In terms of biological role, core subunit of the mitochondrial membrane respiratory chain NADH dehydrogenase (Complex I) which catalyzes electron transfer from NADH through the respiratory chain, using ubiquinone as an electron acceptor. Part of the enzyme membrane arm which is embedded in the lipid bilayer and involved in proton translocation. The polypeptide is NADH-ubiquinone oxidoreductase chain 4L (MT-ND4L) (Eulemur mongoz (Mongoose lemur)).